The chain runs to 595 residues: RuBisCO large subunit-binding protein subunit beta, chloroplastic (595 aa).

A chloroplast-targeting transit peptide spans 1–49 (MASTFSATTSSCNLSSSAAISSFPLAAGKRNANKVVLPRKNRNVKVSAM).

This sequence belongs to the chaperonin (HSP60) family. Oligomer of probably six alpha and six beta subunits.

It localises to the plastid. Its subcellular location is the chloroplast. This protein binds RuBisCO small and large subunits and is implicated in the assembly of the enzyme oligomer. This Pisum sativum (Garden pea) protein is RuBisCO large subunit-binding protein subunit beta, chloroplastic.